We begin with the raw amino-acid sequence, 119 residues long: MIPGRMNSREMRRLMAQMGIKSTEMDDVKKVIFVGKEKDYVIENAQVTMIEAQGVKTFQVVGDFRETPKKQEGKKEETFPEDDIKLVMDQTGVAREKAIEALKAASGEPAQAILNLTQK.

Positions 5-73 (RMNSREMRRL…FRETPKKQEG (69 aa)) constitute an NAC-A/B domain.

This sequence belongs to the NAC-alpha family. Homodimer. Interacts with the ribosome. Binds ribosomal RNA.

In terms of biological role, contacts the emerging nascent chain on the ribosome. The polypeptide is Nascent polypeptide-associated complex protein (Thermoplasma volcanium (strain ATCC 51530 / DSM 4299 / JCM 9571 / NBRC 15438 / GSS1)).